The following is a 159-amino-acid chain: Serine-protein kinase RsbW (159 aa).

The protein belongs to the anti-sigma-factor family.

The enzyme catalyses L-seryl-[protein] + ATP = O-phospho-L-seryl-[protein] + ADP + H(+). It carries out the reaction L-threonyl-[protein] + ATP = O-phospho-L-threonyl-[protein] + ADP + H(+). Its function is as follows. Negative regulator of sigma-B activity. Phosphorylates and inactivates its specific antagonist protein, RsbV. Upon phosphorylation of RsbV, RsbW is released and binds to sigma-B, thereby blocking its ability to form an RNA polymerase holoenzyme (E-sigma-B). The sequence is that of Serine-protein kinase RsbW from Staphylococcus aureus (strain MRSA252).